A 455-amino-acid chain; its full sequence is tRNA-2-methylthio-N(6)-dimethylallyladenosine synthase (455 aa).

The MTTase N-terminal domain occupies 3–117 (KGLYIESYGC…LPELIMKATR (115 aa)). Positions 12, 48, 80, 155, 159, and 162 each coordinate [4Fe-4S] cluster. The Radical SAM core domain maps to 141–375 (VSRGVSAFVS…LLTQQRLFTK (235 aa)).

This sequence belongs to the methylthiotransferase family. MiaB subfamily. As to quaternary structure, monomer. The cofactor is [4Fe-4S] cluster.

It localises to the cytoplasm. The catalysed reaction is N(6)-dimethylallyladenosine(37) in tRNA + (sulfur carrier)-SH + AH2 + 2 S-adenosyl-L-methionine = 2-methylsulfanyl-N(6)-dimethylallyladenosine(37) in tRNA + (sulfur carrier)-H + 5'-deoxyadenosine + L-methionine + A + S-adenosyl-L-homocysteine + 2 H(+). Its function is as follows. Catalyzes the methylthiolation of N6-(dimethylallyl)adenosine (i(6)A), leading to the formation of 2-methylthio-N6-(dimethylallyl)adenosine (ms(2)i(6)A) at position 37 in tRNAs that read codons beginning with uridine. The polypeptide is tRNA-2-methylthio-N(6)-dimethylallyladenosine synthase (Anaplasma marginale (strain St. Maries)).